The chain runs to 643 residues: UPF0313 protein CLD_0573 (643 aa).

One can recognise a Radical SAM core domain in the interval 295–566 (AIKEVKFSIT…RMQRALLQFS (272 aa)). 3 residues coordinate [4Fe-4S] cluster: Cys-309, Cys-313, and Cys-316. Positions 598-643 (NKPYKKSHKKNNAKNNNNHYNKNNNKNKDISKKNKKNSLSKHKKRK) are disordered. Positions 600-609 (PYKKSHKKNN) are enriched in basic residues. Residues 610 to 621 (AKNNNNHYNKNN) are compositionally biased toward low complexity. A compositionally biased stretch (basic residues) spans 630–643 (KNKKNSLSKHKKRK).

This sequence belongs to the UPF0313 family. The cofactor is [4Fe-4S] cluster.

The chain is UPF0313 protein CLD_0573 from Clostridium botulinum (strain Okra / Type B1).